We begin with the raw amino-acid sequence, 163 residues long: Transcription elongation factor GreB (163 aa).

Positions 54-76 (GKRRMREIDRRIRFLTKRLEAAV) form a coiled coil.

The protein belongs to the GreA/GreB family. GreB subfamily.

Necessary for efficient RNA polymerase transcription elongation past template-encoded arresting sites. The arresting sites in DNA have the property of trapping a certain fraction of elongating RNA polymerases that pass through, resulting in locked ternary complexes. Cleavage of the nascent transcript by cleavage factors such as GreA or GreB allows the resumption of elongation from the new 3'terminus. GreB releases sequences of up to 9 nucleotides in length. This Neisseria meningitidis serogroup A / serotype 4A (strain DSM 15465 / Z2491) protein is Transcription elongation factor GreB.